A 529-amino-acid chain; its full sequence is uncharacterized protein (529 aa).

The Arf-GAP domain maps to 13 to 129; that stretch reads QTAMRKMRAL…LSTLCQEAQR (117 aa). A C4-type zinc finger spans residues 28–51; that stretch reads CFDCGARNPTWCTVTYGVFLCIDC. Positions 291–301 are enriched in basic and acidic residues; the sequence is QMEAKVAKDPT. 4 disordered regions span residues 291–313, 335–357, 398–424, and 468–493; these read QMEAKVAKDPTKAASVDRLGMGG, VLTFKKPSQPKEDDDWEVIDDKY, KSRYTASSSSSSTSRAPTTRLTAGASP, and FGSEDLWGNGSQQRQSSQVPDMSDLK. Residues 399–420 are compositionally biased toward low complexity; that stretch reads SRYTASSSSSSTSRAPTTRLTA. The segment covering 476–487 has biased composition (polar residues); sequence NGSQQRQSSQVP.

Functionally, GTPase-activating protein for the ADP ribosylation factor family. This is an uncharacterized protein from Caenorhabditis elegans.